Here is a 509-residue protein sequence, read N- to C-terminus: Lysophospholipid acyltransferase (509 aa).

Residues 1–14 (MAYLIDIPFEYFSS) lie on the Lumenal side of the membrane. The chain crosses the membrane as a helical span at residues 15-35 (FLGVHPDQLKLLFCFLSAYPF). The Cytoplasmic portion of the chain corresponds to 36–55 (AGILKRLPSAPWIRNLFSIS). Residues 56-76 (IGLFYLIGVHHLYDGVLVLLF) traverse the membrane as a helical segment. At 77–94 (DALFTYFVAAFYRSSRMP) the chain is on the lumenal side. Residues 95–115 (WIIFIVILGHTFSSHVIRYIY) traverse the membrane as a helical segment. Over 116–223 (PSENTDITAS…LEPALGRCWR (108 aa)) the chain is Cytoplasmic. A helical membrane pass occupies residues 224–244 (GLLWLILFITGSSIYPLKFLL). Topologically, residues 245-246 (TP) are lumenal. A helical transmembrane segment spans residues 247–267 (KFASSPILLKYGYVCITAFVA). Over 268 to 410 (RMKYYGAWEL…TPGPFKRVYD (143 aa)) the chain is Cytoplasmic. His363 is a catalytic residue. The chain crosses the membrane as a helical span at residues 411-431 (VIGMVATNLSLSYLIISFLLL). The Lumenal segment spans residues 432–441 (NLKESIHVWK). A helical membrane pass occupies residues 442-462 (ELYFIVHIYILIALAVFNSPI). Residues 463 to 509 (RSKLDNKIRSRVNSYKLKSYEQSMKSTSDTDMLNMSVPKREDFENDE) lie on the Cytoplasmic side of the membrane. The tract at residues 488–509 (STSDTDMLNMSVPKREDFENDE) is disordered. Position 490 is a phosphoserine (Ser490). Residues 500-509 (PKREDFENDE) show a composition bias toward basic and acidic residues.

This sequence belongs to the membrane-bound acyltransferase family.

It localises to the endoplasmic reticulum membrane. It is found in the microsome membrane. The enzyme catalyses a 1-acyl-sn-glycero-3-phosphate + an acyl-CoA = a 1,2-diacyl-sn-glycero-3-phosphate + CoA. It catalyses the reaction a 1-acyl-sn-glycero-3-phosphocholine + an acyl-CoA = a 1,2-diacyl-sn-glycero-3-phosphocholine + CoA. It carries out the reaction a 1-acyl-sn-glycero-3-phosphoethanolamine + an acyl-CoA = a 1,2-diacyl-sn-glycero-3-phosphoethanolamine + CoA. In terms of biological role, membrane-bound O-acyltransferase that mediates the incorporation of unsaturated acyl chains into the sn-2 position of phospholipids. This chain is Lysophospholipid acyltransferase (ale1), found in Schizosaccharomyces pombe (strain 972 / ATCC 24843) (Fission yeast).